We begin with the raw amino-acid sequence, 206 residues long: Ribosomal RNA small subunit methyltransferase G (206 aa).

S-adenosyl-L-methionine contacts are provided by residues G74, L79, 125-126, and R140; that span reads VE.

This sequence belongs to the methyltransferase superfamily. RNA methyltransferase RsmG family.

The protein localises to the cytoplasm. It carries out the reaction guanosine(527) in 16S rRNA + S-adenosyl-L-methionine = N(7)-methylguanosine(527) in 16S rRNA + S-adenosyl-L-homocysteine. Functionally, specifically methylates the N7 position of guanine in position 527 of 16S rRNA. This is Ribosomal RNA small subunit methyltransferase G from Shewanella baltica (strain OS223).